An 886-amino-acid polypeptide reads, in one-letter code: Leucine--tRNA ligase (886 aa).

Positions 46 to 56 match the 'HIGH' region motif; that stretch reads PYPSGKLHMGH. Residues 638–642 carry the 'KMSKS' region motif; the sequence is TMSKS. Lysine 641 contributes to the ATP binding site.

Belongs to the class-I aminoacyl-tRNA synthetase family.

Its subcellular location is the cytoplasm. It catalyses the reaction tRNA(Leu) + L-leucine + ATP = L-leucyl-tRNA(Leu) + AMP + diphosphate. In Polaromonas sp. (strain JS666 / ATCC BAA-500), this protein is Leucine--tRNA ligase.